Consider the following 302-residue polypeptide: Oxygen-dependent coproporphyrinogen-III oxidase (302 aa).

S94 provides a ligand contact to substrate. A divalent metal cation-binding residues include H98 and H108. H108 acts as the Proton donor in catalysis. Residue N110 to R112 coordinates substrate. A divalent metal cation-binding residues include H147 and H177. The interval Y242–E277 is important for dimerization. G260–R262 contacts substrate.

This sequence belongs to the aerobic coproporphyrinogen-III oxidase family. Homodimer. The cofactor is a divalent metal cation.

It localises to the cytoplasm. The catalysed reaction is coproporphyrinogen III + O2 + 2 H(+) = protoporphyrinogen IX + 2 CO2 + 2 H2O. It functions in the pathway porphyrin-containing compound metabolism; protoporphyrin-IX biosynthesis; protoporphyrinogen-IX from coproporphyrinogen-III (O2 route): step 1/1. Functionally, involved in the heme biosynthesis. Catalyzes the aerobic oxidative decarboxylation of propionate groups of rings A and B of coproporphyrinogen-III to yield the vinyl groups in protoporphyrinogen-IX. In Erwinia tasmaniensis (strain DSM 17950 / CFBP 7177 / CIP 109463 / NCPPB 4357 / Et1/99), this protein is Oxygen-dependent coproporphyrinogen-III oxidase.